Consider the following 97-residue polypeptide: Large ribosomal subunit protein bL27 (97 aa).

Residues 1–12 (MLKMNLANLQLF) constitute a propeptide that is removed on maturation. Residues 14 to 37 (HKKGGGSTSNGRDSQAKRLGAKAA) are disordered.

It belongs to the bacterial ribosomal protein bL27 family. Post-translationally, the N-terminus is cleaved by ribosomal processing cysteine protease Prp.

The polypeptide is Large ribosomal subunit protein bL27 (Streptococcus uberis (strain ATCC BAA-854 / 0140J)).